Consider the following 577-residue polypeptide: MNIQSILSDKIKQAMILAGADQSCDALIRQSGKPQFGDYQANGIMAAAKKLGLNPREFAQKVLDNAQLSDIAEKLEIAGPGFINIFLNPTWLTTEISAALSHKNLGIQATNKQTVVIDYSSPNVAKEMHVGHLRSTIIGDAVARTLEFLGHNVIRANHVGDWGTQFGMLIAYLEKMQHEHASEMELQDLEAFYREAKKHYDEDEIFAEKARNYVVKLQSGDEYCRTMWKRLVDITMQQNQHNYNRLNVTLTEKDVMGESLYNPMLPSIVEDLKKQGLAVENDGALVVYLDEFKNKDGDPMGVIVQKKDGGFLYTTTDIAAAKYRYETLKANRALVFSDTRQSQHMQQAWLITRKAGYVPDSFSLEHKNFGMMLGKDGKPFKTRTGGTIKLADLLDEAIERATVLINEKNTNLSNDEKEAVIEAVGIGAVKYADLSKNRTTDYVFDWDNMLSFEGNTAPYMQYAYTRIRSIFNKTDINSTALLAAPLTIKDDKERTLAIKLLQFEEAVQTVGKEGTPHVLCAYLYELAGIFSSFYEHCPILNAEDESIKLSRLKLALLTEKTLKQGLTLLGIKTVEKM.

Residues 122–132 (PNVAKEMHVGH) carry the 'HIGH' region motif.

This sequence belongs to the class-I aminoacyl-tRNA synthetase family. Monomer.

It is found in the cytoplasm. The enzyme catalyses tRNA(Arg) + L-arginine + ATP = L-arginyl-tRNA(Arg) + AMP + diphosphate. The protein is Arginine--tRNA ligase of Haemophilus influenzae (strain PittGG).